Here is a 403-residue protein sequence, read N- to C-terminus: Homoserine O-succinyltransferase (403 aa).

The AB hydrolase-1 domain maps to 58 to 366; it reads NAVLICHALS…ESNHGHDAFL (309 aa). The Nucleophile role is filled by S164. Substrate is bound at residue R234. Residues D329 and H362 contribute to the active site. Position 363 (D363) interacts with substrate.

This sequence belongs to the AB hydrolase superfamily. MetX family. As to quaternary structure, homodimer.

It is found in the cytoplasm. The catalysed reaction is L-homoserine + succinyl-CoA = O-succinyl-L-homoserine + CoA. It participates in amino-acid biosynthesis; L-methionine biosynthesis via de novo pathway; O-succinyl-L-homoserine from L-homoserine: step 1/1. Its function is as follows. Transfers a succinyl group from succinyl-CoA to L-homoserine, forming succinyl-L-homoserine. In Halothiobacillus neapolitanus (strain ATCC 23641 / c2) (Thiobacillus neapolitanus), this protein is Homoserine O-succinyltransferase.